The chain runs to 91 residues: Small ribosomal subunit protein uS19 (91 aa).

The protein belongs to the universal ribosomal protein uS19 family.

Protein S19 forms a complex with S13 that binds strongly to the 16S ribosomal RNA. The protein is Small ribosomal subunit protein uS19 of Halorhodospira halophila (strain DSM 244 / SL1) (Ectothiorhodospira halophila (strain DSM 244 / SL1)).